Here is a 359-residue protein sequence, read N- to C-terminus: DNA replication and repair protein RecF (359 aa).

30-37 (GNNGSGKT) contributes to the ATP binding site.

It belongs to the RecF family.

It localises to the cytoplasm. Functionally, the RecF protein is involved in DNA metabolism; it is required for DNA replication and normal SOS inducibility. RecF binds preferentially to single-stranded, linear DNA. It also seems to bind ATP. The sequence is that of DNA replication and repair protein RecF from Haemophilus influenzae (strain 86-028NP).